Consider the following 379-residue polypeptide: Alcohol dehydrogenase 1 (379 aa).

Zn(2+) contacts are provided by Cys47, Thr49, His69, Cys99, Cys102, Cys105, Cys113, and Cys177. An alcohol contacts are provided by Thr49 and His69. Thr49 lines the NAD(+) pocket. Residues 202–207, Asp226, Arg231, Thr272, Val295, 295–297, Phe322, and Arg372 contribute to the NAD(+) site; these read GLGAVG and VGV.

This sequence belongs to the zinc-containing alcohol dehydrogenase family. In terms of assembly, homodimer. Requires Zn(2+) as cofactor.

It localises to the cytoplasm. It catalyses the reaction a primary alcohol + NAD(+) = an aldehyde + NADH + H(+). It carries out the reaction a secondary alcohol + NAD(+) = a ketone + NADH + H(+). This Zea mays (Maize) protein is Alcohol dehydrogenase 1 (ADH1).